The following is a 509-amino-acid chain: ATP synthase subunit alpha (509 aa).

171-178 (GDRKTGKT) provides a ligand contact to ATP.

This sequence belongs to the ATPase alpha/beta chains family. In terms of assembly, F-type ATPases have 2 components, CF(1) - the catalytic core - and CF(0) - the membrane proton channel. CF(1) has five subunits: alpha(3), beta(3), gamma(1), delta(1), epsilon(1). CF(0) has three main subunits: a(1), b(2) and c(9-12). The alpha and beta chains form an alternating ring which encloses part of the gamma chain. CF(1) is attached to CF(0) by a central stalk formed by the gamma and epsilon chains, while a peripheral stalk is formed by the delta and b chains.

It is found in the cell inner membrane. The enzyme catalyses ATP + H2O + 4 H(+)(in) = ADP + phosphate + 5 H(+)(out). Produces ATP from ADP in the presence of a proton gradient across the membrane. The alpha chain is a regulatory subunit. In Ehrlichia canis (strain Jake), this protein is ATP synthase subunit alpha.